Reading from the N-terminus, the 367-residue chain is Peptide chain release factor 2 (367 aa).

Glutamine 250 is modified (N5-methylglutamine).

The protein belongs to the prokaryotic/mitochondrial release factor family. In terms of processing, methylated by PrmC. Methylation increases the termination efficiency of RF2.

It is found in the cytoplasm. Functionally, peptide chain release factor 2 directs the termination of translation in response to the peptide chain termination codons UGA and UAA. The polypeptide is Peptide chain release factor 2 (Chloroflexus aggregans (strain MD-66 / DSM 9485)).